A 431-amino-acid polypeptide reads, in one-letter code: Histidinol dehydrogenase (431 aa).

Positions 127, 190, and 213 each coordinate NAD(+). Substrate-binding residues include Ser-238, Gln-260, and His-263. Zn(2+) contacts are provided by Gln-260 and His-263. Active-site proton acceptor residues include Glu-329 and His-330. Substrate is bound by residues His-330, Asp-363, Glu-417, and His-422. Zn(2+) is bound at residue Asp-363. His-422 contributes to the Zn(2+) binding site.

It belongs to the histidinol dehydrogenase family. It depends on Zn(2+) as a cofactor.

The catalysed reaction is L-histidinol + 2 NAD(+) + H2O = L-histidine + 2 NADH + 3 H(+). It functions in the pathway amino-acid biosynthesis; L-histidine biosynthesis; L-histidine from 5-phospho-alpha-D-ribose 1-diphosphate: step 9/9. In terms of biological role, catalyzes the sequential NAD-dependent oxidations of L-histidinol to L-histidinaldehyde and then to L-histidine. The sequence is that of Histidinol dehydrogenase from Methanopyrus kandleri (strain AV19 / DSM 6324 / JCM 9639 / NBRC 100938).